Here is a 1162-residue protein sequence, read N- to C-terminus: Isoleucine--tRNA ligase (1162 aa).

The short motif at 50 to 60 (PSANGMPGIHH) is the 'HIGH' region element. Residues 710–714 (KMSKR) carry the 'KMSKS' region motif. Residue Lys-713 participates in ATP binding.

Belongs to the class-I aminoacyl-tRNA synthetase family. IleS type 2 subfamily. Monomer. Zn(2+) serves as cofactor.

Its subcellular location is the cytoplasm. It catalyses the reaction tRNA(Ile) + L-isoleucine + ATP = L-isoleucyl-tRNA(Ile) + AMP + diphosphate. Its function is as follows. Catalyzes the attachment of isoleucine to tRNA(Ile). As IleRS can inadvertently accommodate and process structurally similar amino acids such as valine, to avoid such errors it has two additional distinct tRNA(Ile)-dependent editing activities. One activity is designated as 'pretransfer' editing and involves the hydrolysis of activated Val-AMP. The other activity is designated 'posttransfer' editing and involves deacylation of mischarged Val-tRNA(Ile). This Bacteroides thetaiotaomicron (strain ATCC 29148 / DSM 2079 / JCM 5827 / CCUG 10774 / NCTC 10582 / VPI-5482 / E50) protein is Isoleucine--tRNA ligase.